The following is a 238-amino-acid chain: Probable transcriptional regulatory protein YeeN (238 aa).

Belongs to the TACO1 family. YeeN subfamily.

Its subcellular location is the cytoplasm. The polypeptide is Probable transcriptional regulatory protein YeeN (Escherichia coli (strain UTI89 / UPEC)).